The following is a 152-amino-acid chain: Large ribosomal subunit protein uL15 (152 aa).

The tract at residues 1–56 (MTSTLNTLKSNLGSRKKKLRKGRGIAAGQGASCGFGMRGQKSRSGRPTRPGFEGGQ) is disordered. Over residues 14 to 23 (SRKKKLRKGR) the composition is skewed to basic residues. Positions 25–37 (IAAGQGASCGFGM) are enriched in gly residues.

It belongs to the universal ribosomal protein uL15 family. As to quaternary structure, part of the 50S ribosomal subunit.

Its function is as follows. Binds to the 23S rRNA. The polypeptide is Large ribosomal subunit protein uL15 (Prochlorococcus marinus (strain MIT 9515)).